We begin with the raw amino-acid sequence, 244 residues long: Cyclin-Q (244 aa).

It belongs to the cyclin family. Cyclin-like FAM58 subfamily.

Functionally, may be an activating cyclin for the cyclin-associated kinase CDK10. This is Cyclin-Q (ccnq) from Xenopus laevis (African clawed frog).